We begin with the raw amino-acid sequence, 73 residues long: uncharacterized protein (73 aa).

This is an uncharacterized protein from Enterobacteria phage RB18 (Bacteriophage RB18).